A 585-amino-acid polypeptide reads, in one-letter code: 1-deoxy-D-xylulose-5-phosphate synthase (585 aa).

Residues H80 and 121–123 contribute to the thiamine diphosphate site; that span reads GHS. D152 serves as a coordination point for Mg(2+). Thiamine diphosphate contacts are provided by residues 153-154, N181, Y259, and E334; that span reads GS. N181 serves as a coordination point for Mg(2+).

Belongs to the transketolase family. DXPS subfamily. In terms of assembly, homodimer. Requires Mg(2+) as cofactor. It depends on thiamine diphosphate as a cofactor.

It catalyses the reaction D-glyceraldehyde 3-phosphate + pyruvate + H(+) = 1-deoxy-D-xylulose 5-phosphate + CO2. It functions in the pathway metabolic intermediate biosynthesis; 1-deoxy-D-xylulose 5-phosphate biosynthesis; 1-deoxy-D-xylulose 5-phosphate from D-glyceraldehyde 3-phosphate and pyruvate: step 1/1. Catalyzes the acyloin condensation reaction between C atoms 2 and 3 of pyruvate and glyceraldehyde 3-phosphate to yield 1-deoxy-D-xylulose-5-phosphate (DXP). The protein is 1-deoxy-D-xylulose-5-phosphate synthase of Buchnera aphidicola subsp. Schizaphis graminum (strain Sg).